The following is a 283-amino-acid chain: Elongation factor Ts (283 aa).

An involved in Mg(2+) ion dislocation from EF-Tu region spans residues 79–82 (TDFV).

It belongs to the EF-Ts family.

It is found in the cytoplasm. Associates with the EF-Tu.GDP complex and induces the exchange of GDP to GTP. It remains bound to the aminoacyl-tRNA.EF-Tu.GTP complex up to the GTP hydrolysis stage on the ribosome. The sequence is that of Elongation factor Ts from Shewanella baltica (strain OS155 / ATCC BAA-1091).